A 630-amino-acid polypeptide reads, in one-letter code: Protein phosphatase 2C-like domain-containing protein 1 (630 aa).

One can recognise a PPM-type phosphatase domain in the interval 170–621; that stretch reads GVGICEDRNS…DNITVMVIFL (452 aa). Residues 557–569 are compositionally biased toward basic and acidic residues; that stretch reads TTHRKPCSEKVTD. Residues 557 to 578 form a disordered region; that stretch reads TTHRKPCSEKVTDRPTSVNDVA.

It belongs to the PP2C family.

The chain is Protein phosphatase 2C-like domain-containing protein 1 (PP2D1) from Homo sapiens (Human).